The sequence spans 111 residues: Small ribosomal subunit protein bS6 (111 aa).

It belongs to the bacterial ribosomal protein bS6 family.

Its function is as follows. Binds together with bS18 to 16S ribosomal RNA. The protein is Small ribosomal subunit protein bS6 of Francisella philomiragia subsp. philomiragia (strain ATCC 25017 / CCUG 19701 / FSC 153 / O#319-036).